We begin with the raw amino-acid sequence, 160 residues long: MPIAASLRVLLLNGPNLSLLGRREVDVYGTVTLADIERTLQLDAQDLDVELSCLQSNHEGVLIDAIHDAFGRCDGLVINPGGLTHTSVALRDAIAGVGLPTVEVHMSNVYRRESFRHHSFIAPVAVGQISGFGADSYRLGLRAIALFLRRRAEQDEGPCR.

Tyrosine 28 acts as the Proton acceptor in catalysis. Residues asparagine 79, histidine 85, and aspartate 92 each contribute to the substrate site. Histidine 105 serves as the catalytic Proton donor. Residues 106–107 (MS) and arginine 116 contribute to the substrate site.

This sequence belongs to the type-II 3-dehydroquinase family. Homododecamer.

It carries out the reaction 3-dehydroquinate = 3-dehydroshikimate + H2O. It participates in metabolic intermediate biosynthesis; chorismate biosynthesis; chorismate from D-erythrose 4-phosphate and phosphoenolpyruvate: step 3/7. In terms of biological role, catalyzes a trans-dehydration via an enolate intermediate. The sequence is that of 3-dehydroquinate dehydratase from Gloeobacter violaceus (strain ATCC 29082 / PCC 7421).